Here is a 30-residue protein sequence, read N- to C-terminus: Nattererin-1 (30 aa).

In terms of tissue distribution, expressed by the skin glands.

The protein resides in the secreted. In terms of biological role, probably has antibacterial activity. This chain is Nattererin-1, found in Physalaemus nattereri (Cuyaba dwarf frog).